The following is a 694-amino-acid chain: MALTNTTITSWKLQEIVAHSSNVSSLVLGKSSGRLLATGGEDCRVNIWAVSKPNCIMSLTGHTSAVGCIQFNSSEERVVAGSLSGSLRLWDLEAAKILRTLMGHKASISSLDFHPMGEYLASGSVDSNIKLWDVRRKGCVFRYKGHTQAVRCLAFSPDGKWLASASDDSTVKLWDLIAGKMITEFTSHTSAVNVVQFHPNEYLLASGSADRTVKLWDLEKFNMIGSSEGETGVVRSVLFNPDGSCLYSGSENTLRVYGWEPDRCFDVVHVGWGKVSDLAISNNQMIAVSYSHTNVSWYVVDLNRVKKSGSVIQGLIQDKPIPAPSSALGTTLRRNYERPTTSCTGQEMKQSSEADRRSPEGERRSPSSEDEKEDKESSAEITNPEDYKEIFQPRSVISRTPPKTTEPFPAPLEHSFSESVLEKPGPVVKIVTPVIDRAGQLKGPITSSTPVQRVEPTVIAAAPRPVAVVTTSASSPSRPVVNTTKPKPSTGIILSTRNEPIGLNAGDFLSHARNAKASAMGDEEALAQIRKGHDTMCVMLSSRSKNLDSVRSVWASGDVKTSLDSAVSMNDLSIVVDVLNIINLKPSLWKLDLCTSILPQIEELLQSRYESYVQTGCMSLKLILKRFWPLISDTLNAPPSVGVDITREERHQKCKACYKQLKNLSNVVKNRAEQVGRHGSTFRELQLLMAPLDY.

WD repeat units lie at residues 18 to 58, 61 to 100, 103 to 142, 145 to 186, 188 to 226, and 229 to 269; these read AHSS…CIMS, GHTSAVGCIQFNSSEERVVAGSLSGSLRLWDLEAAKILRT, GHKASISSLDFHPMGEYLASGSVDSNIKLWDVRRKGCVFR, GHTQ…TEFT, HTSAVNVVQFHPNEYLLASGSADRTVKLWDLEKFNMIGS, and GETG…DVVH. Disordered regions lie at residues 319 to 410 and 470 to 492; these read KPIP…PFPA and TTSASSPSRPVVNTTKPKPSTGI. Over residues 327-349 the composition is skewed to polar residues; sequence ALGTTLRRNYERPTTSCTGQEMK. A compositionally biased stretch (basic and acidic residues) spans 350–378; it reads QSSEADRRSPEGERRSPSSEDEKEDKESS. The span at 470-481 shows a compositional bias: low complexity; the sequence is TTSASSPSRPVV. Positions 482 to 492 are enriched in polar residues; that stretch reads NTTKPKPSTGI.

It belongs to the WD repeat KATNB1 family. In terms of assembly, interacts with katna1. This interaction enhances the microtubule binding and severing activity of katna1 and also targets this activity to the centrosome.

The protein localises to the cytoplasm. Its subcellular location is the cytoskeleton. The protein resides in the microtubule organizing center. It is found in the centrosome. It localises to the spindle pole. The protein localises to the spindle. In terms of biological role, participates in a complex which severs microtubules in an ATP-dependent manner. May act to target the enzymatic subunit of this complex to sites of action such as the centrosome. Microtubule severing may promote rapid reorganization of cellular microtubule arrays and the release of microtubules from the centrosome following nucleation. This chain is Katanin p80 WD40 repeat-containing subunit B1 (katnb1), found in Danio rerio (Zebrafish).